A 284-amino-acid chain; its full sequence is uncharacterized protein (284 aa).

The interval 236–284 (IDITNEADSSEIIDSEPSNKDETEKPSAQETDPFDGKPVDIKDDELPFD) is disordered. Composition is skewed to basic and acidic residues over residues 252-262 (PSNKDETEKPS) and 269-284 (FDGKPVDIKDDELPFD).

This is an uncharacterized protein from Bacillus subtilis (strain 168).